The following is a 113-amino-acid chain: Large ribosomal subunit protein bL19 (113 aa).

It belongs to the bacterial ribosomal protein bL19 family.

This protein is located at the 30S-50S ribosomal subunit interface and may play a role in the structure and function of the aminoacyl-tRNA binding site. The sequence is that of Large ribosomal subunit protein bL19 from Mycolicibacterium gilvum (strain PYR-GCK) (Mycobacterium gilvum (strain PYR-GCK)).